Here is a 716-residue protein sequence, read N- to C-terminus: Fatty acid oxidation complex subunit alpha (716 aa).

Residues 1–189 (MIYQSPTIQV…KVGAVDAVVA (189 aa)) form an enoyl-CoA hydratase/isomerase region. Asp-296 lines the substrate pocket. Residues 311–716 (KAVNSAAVLG…AANNGSYYQA (406 aa)) are 3-hydroxyacyl-CoA dehydrogenase. NAD(+) is bound by residues Met-324, Asp-343, 400–402 (VVE), Lys-407, and Ser-429. Residue His-450 is the For 3-hydroxyacyl-CoA dehydrogenase activity of the active site. Asn-453 is an NAD(+) binding site. Substrate is bound by residues Asn-500 and Tyr-660.

In the N-terminal section; belongs to the enoyl-CoA hydratase/isomerase family. It in the C-terminal section; belongs to the 3-hydroxyacyl-CoA dehydrogenase family. Heterotetramer of two alpha chains (FadB) and two beta chains (FadA).

It carries out the reaction a (3S)-3-hydroxyacyl-CoA + NAD(+) = a 3-oxoacyl-CoA + NADH + H(+). It catalyses the reaction a (3S)-3-hydroxyacyl-CoA = a (2E)-enoyl-CoA + H2O. The enzyme catalyses a 4-saturated-(3S)-3-hydroxyacyl-CoA = a (3E)-enoyl-CoA + H2O. The catalysed reaction is (3S)-3-hydroxybutanoyl-CoA = (3R)-3-hydroxybutanoyl-CoA. It carries out the reaction a (3Z)-enoyl-CoA = a 4-saturated (2E)-enoyl-CoA. It catalyses the reaction a (3E)-enoyl-CoA = a 4-saturated (2E)-enoyl-CoA. It functions in the pathway lipid metabolism; fatty acid beta-oxidation. Functionally, involved in the aerobic and anaerobic degradation of long-chain fatty acids via beta-oxidation cycle. Catalyzes the formation of 3-oxoacyl-CoA from enoyl-CoA via L-3-hydroxyacyl-CoA. It can also use D-3-hydroxyacyl-CoA and cis-3-enoyl-CoA as substrate. The polypeptide is Fatty acid oxidation complex subunit alpha (Shewanella oneidensis (strain ATCC 700550 / JCM 31522 / CIP 106686 / LMG 19005 / NCIMB 14063 / MR-1)).